Consider the following 443-residue polypeptide: Transcriptional adapter 2-alpha (443 aa).

The residue at position 6 (P6) is a Phosphoserine; in variant Ser-6. Residues 12 to 69 (SDKPPCRGCSSYLMEPYIKCAECGPPPFFLCLQCFTRGFEYKKHQSDHTYEIMTSDFP) form a ZZ-type zinc finger. The Zn(2+) site is built by C17, C20, C31, C34, C42, C45, H55, and H59. The SANT domain occupies 70–122 (VLDPSWTAQEEMALLEAVMDCGFGNWQDVANQMCTKTKEECEKHYMKHFINNP). Residues K132 and K138 each participate in a glycyl lysine isopeptide (Lys-Gly) (interchain with G-Cter in SUMO2) cross-link. A disordered region spans residues 348–372 (SPSIPMASNSGRRSAPPLNLTGLPG). The 88-residue stretch at 356–443 (NSGRRSAPPL…LIREGYITKG (88 aa)) folds into the SWIRM domain. Residues 426 to 435 (KTRKIYDFLI) mediate DNA binding.

As to quaternary structure, interacts with GCN5 and NR3C1. Associated with the P/CAF protein in the PCAF complex. Component of the PCAF complex, at least composed of TADA2L/ADA2, TADA3L/ADA3, TAF5L/PAF65-beta, TAF6L/PAF65-alpha, TAF10/TAFII30, TAF12/TAFII20, TAF9/TAFII31 and TRRAP. Component of the ADA2A-containing complex (ATAC), composed of KAT14, KAT2A, TADA2L, TADA3L, ZZ3, MBIP, WDR5, YEATS2, CCDC101 and DR1. Interacts with CCDC134. In terms of tissue distribution, expressed in all tissues, but most abundantly in testis.

It is found in the nucleus. The protein resides in the chromosome. Functionally, component of the ATAC complex, a complex with histone acetyltransferase activity on histones H3 and H4. Required for the function of some acidic activation domains, which activate transcription from a distant site. Binds double-stranded DNA. Binds dinucleosomes, probably at the linker region between neighboring nucleosomes. Plays a role in chromatin remodeling. May promote TP53/p53 'Lys-321' acetylation, leading to reduced TP53 stability and transcriptional activity. May also promote XRCC6 acetylation thus facilitating cell apoptosis in response to DNA damage. This Homo sapiens (Human) protein is Transcriptional adapter 2-alpha (TADA2A).